The following is a 168-amino-acid chain: MKMMTIYIISLLLMIGFVAFASKPSPIYGGLSLVVSGGLGCGMVVSLEDVFLGLVVFLVYLGGMLVVFGYTTAMATEEYPETWVGNVVAFIMLLFVLLLQVGWYFMSKLVYIIMAIKLFDFVETSLVGQDYNGVSQLYYCGGWALALLGWILFMTIYVVLEVVRERSY.

A run of 5 helical transmembrane segments spans residues 1-21, 27-47, 50-70, 87-107, and 143-163; these read MKMM…VAFA, IYGG…VVSL, VFLG…VFGY, VVAF…YFMS, and WALA…LEVV.

Belongs to the complex I subunit 6 family. As to quaternary structure, core subunit of respiratory chain NADH dehydrogenase (Complex I) which is composed of 45 different subunits.

Its subcellular location is the mitochondrion inner membrane. The catalysed reaction is a ubiquinone + NADH + 5 H(+)(in) = a ubiquinol + NAD(+) + 4 H(+)(out). Its function is as follows. Core subunit of the mitochondrial membrane respiratory chain NADH dehydrogenase (Complex I) which catalyzes electron transfer from NADH through the respiratory chain, using ubiquinone as an electron acceptor. Essential for the catalytic activity and assembly of complex I. The protein is NADH-ubiquinone oxidoreductase chain 6 (MT-ND6) of Didelphis virginiana (North American opossum).